The chain runs to 287 residues: Protease HtpX (287 aa).

2 helical membrane passes run 4-24 (VMLF…VLNI) and 36-56 (LSGL…ISLM). Histidine 143 lines the Zn(2+) pocket. Residue glutamate 144 is part of the active site. Residue histidine 147 participates in Zn(2+) binding. 2 consecutive transmembrane segments (helical) span residues 158-178 (LMQG…ANIV) and 192-212 (MVYF…ASFI). Glutamate 221 serves as a coordination point for Zn(2+).

Belongs to the peptidase M48B family. It depends on Zn(2+) as a cofactor.

It localises to the cell inner membrane. This Vibrio atlanticus (strain LGP32) (Vibrio splendidus (strain Mel32)) protein is Protease HtpX.